Consider the following 288-residue polypeptide: Shikimate dehydrogenase (NADP(+)) (288 aa).

Shikimate contacts are provided by residues 15–17 (SKS) and Thr-64. Lys-68 (proton acceptor) is an active-site residue. Glu-83 contacts NADP(+). Shikimate contacts are provided by Asn-92 and Asp-117. Residues 141–145 (GAGGA), 165–170 (NRTVSK), and Met-232 each bind NADP(+). Tyr-234 serves as a coordination point for shikimate. Gly-254 provides a ligand contact to NADP(+).

This sequence belongs to the shikimate dehydrogenase family. Homodimer.

The catalysed reaction is shikimate + NADP(+) = 3-dehydroshikimate + NADPH + H(+). The protein operates within metabolic intermediate biosynthesis; chorismate biosynthesis; chorismate from D-erythrose 4-phosphate and phosphoenolpyruvate: step 4/7. Functionally, involved in the biosynthesis of the chorismate, which leads to the biosynthesis of aromatic amino acids. Catalyzes the reversible NADPH linked reduction of 3-dehydroshikimate (DHSA) to yield shikimate (SA). The chain is Shikimate dehydrogenase (NADP(+)) from Psychrobacter cryohalolentis (strain ATCC BAA-1226 / DSM 17306 / VKM B-2378 / K5).